Reading from the N-terminus, the 523-residue chain is REST corepressor 2 (523 aa).

The disordered stretch occupies residues 1–43; it reads MPSVMEKPSAGSGILSRSRAKTAPNGGQPHSEDDSSEEEHSHD. Residues 30–43 show a composition bias toward basic and acidic residues; it reads HSEDDSSEEEHSHD. Phosphoserine occurs at positions 31, 35, 36, and 63. Residues 44–129 enclose the ELM2 domain; it reads SMIRVGTNYQ…KSLADLANFT (86 aa). Lysine 88 is covalently cross-linked (Glycyl lysine isopeptide (Lys-Gly) (interchain with G-Cter in SUMO2)). The SANT 1 domain occupies 130–181; it reads PFPDEWTVEDKVLFEQAFGFHGKCFQRIQQMLPDKLIPSLVKYYYSWKKTRS. The interval 185–265 is disordered; the sequence is VMDRQARRLG…RRRPPKGMYL (81 aa). Serine 202 carries the post-translational modification Phosphoserine. The segment covering 248–260 has biased composition (basic residues); the sequence is YRHHPLRTRRRPP. A coiled-coil region spans residues 283-314; it reads TLRGLDSQLISLKRQVQSMKQTNSSLRQALEG. The SANT 2 domain maps to 327-378; it reads KFNSRWTTDEQLLAVQAIRRYGKDFGAIAEVIGNKTLTQVKTFFVSYRRRFN. Positions 387-523 are disordered; that stretch reads EAEQDGAPTA…AQLEPPAPSL (137 aa). Residues 432–459 show a composition bias toward pro residues; sequence SVPPAPPPPPPPTSLSQPPPLLRPPLPT. Residues 460-482 show a composition bias toward low complexity; it reads APTLLRQPPPLQQGRFLQPRLAP. Residue arginine 479 is modified to Asymmetric dimethylarginine.

The protein belongs to the CoREST family.

Its subcellular location is the nucleus. Its function is as follows. May act as a component of a corepressor complex that represses transcription. The sequence is that of REST corepressor 2 (Rcor2) from Rattus norvegicus (Rat).